Reading from the N-terminus, the 197-residue chain is Large ribosomal subunit protein eL15 (197 aa).

A compositionally biased stretch (basic residues) spans 163 to 172 (GKTSAGRKGR). The tract at residues 163-197 (GKTSAGRKGRGMQTRGTGTEKTRPSVRSNLNRSKK) is disordered. Residues 186–197 (PSVRSNLNRSKK) show a composition bias toward polar residues.

This sequence belongs to the eukaryotic ribosomal protein eL15 family.

The sequence is that of Large ribosomal subunit protein eL15 from Methanococcoides burtonii (strain DSM 6242 / NBRC 107633 / OCM 468 / ACE-M).